The sequence spans 394 residues: 3-amino-4-hydroxybenzoate 2-monooxygenase (394 aa).

Residues alanine 16 and arginine 109 each coordinate FAD. The active-site Proton acceptor is tyrosine 214. An FAD-binding site is contributed by aspartate 287.

This sequence belongs to the 6-hydroxynicotinate 3-monooxygenase family. The cofactor is FAD.

It catalyses the reaction 3-amino-4-hydroxybenzoate + NADPH + O2 + H(+) = 3-amino-2,4-dihydroxybenzoate + NADP(+) + H2O. Its pathway is antibiotic biosynthesis. Functionally, part of a gene cluster involved in the biosynthesis of cremeomycin, a light-sensitive o-diazoquinone with antibacterial and antiproliferative effects. Catalyzes the hydroxylation of 3-amino-4-hydroxybenzoate (3,4-AHBA) to 3-amino-2,4-dihydroxybenzoate (3,2,4-ADHBA). This is 3-amino-4-hydroxybenzoate 2-monooxygenase from Streptomyces cremeus.